The sequence spans 360 residues: MLVPTALAARLLSLFQQQLGSLWSGLAMLFCWLRIALGWPDPGKGQPRVRGEPKETQETHEDPGSAQPTTPVSVNYHFTRQCNYKCGFCFHTAKTSFVLPLEEAKRGLLLLKQAGMEKINFSGGEPFLQDRGEYLGKLVRFCKEELALPSVSIVSNGSLIRERWFKDYGDYLDILAISCDSFDEQVNVLIGRGQGKKNHVENLQKLRKWCRDYKVAFKINSVINRFNVDEDMNEHIKALSPVRWKVFQCLLIEGENSGEDALREAERFLISNEEFEAFLQRHKDVSCLVPESNQKMKDSYLILDEYMRFLNCTGGRKDPSRSILDVGVEEAIKFSGFDEKMFLKRGGKYVWSKADLKLDW.

The disordered stretch occupies residues 44–71 (KGQPRVRGEPKETQETHEDPGSAQPTTP). The span at 49–63 (VRGEPKETQETHEDP) shows a compositional bias: basic and acidic residues. The region spanning 68 to 288 (PTTPVSVNYH…LQRHKDVSCL (221 aa)) is the Radical SAM core domain. 3 residues coordinate [4Fe-4S] cluster: C82, C86, and C89. K196 is modified (N6-acetyllysine). Residue K205 forms a Glycyl lysine isopeptide (Lys-Gly) (interchain with G-Cter in ubiquitin) linkage.

This sequence belongs to the radical SAM superfamily. RSAD2 family. Homodimer. Interacts with IRAK1 and TRAF6. Interacts with FPPS. Interacts with HADHB. Interacts (via C-terminus) with VAPA/VAP33 (via C-terminus). [4Fe-4S] cluster serves as cofactor. Acetylated by HAT1. HAT1-mediated acetylation of Lys-196 in turn recruits UBE4A that stimulates RSAD2 polyubiquitination leading to proteasomal degradation. Post-translationally, 'Lys-6'-linked polyubiquitination at Lys-205 leads to RSAD2 protein degradation. As to expression, in neonatal rat tibia, specifically localized in cells of the periosteum, in osteoblasts lining endosteal and peristeal bone surfaces, to articular surfaces of cartilage and in perichondral cells but not in chondrocytes (at protein level). Expressed predominantly in bone marrow and spleen.

It is found in the endoplasmic reticulum membrane. Its subcellular location is the golgi apparatus. It localises to the endoplasmic reticulum. The protein localises to the lipid droplet. The protein resides in the mitochondrion. It is found in the mitochondrion inner membrane. Its subcellular location is the mitochondrion outer membrane. It catalyses the reaction CTP + AH2 + S-adenosyl-L-methionine = 3'-deoxy-3',4'-didehydro-CTP + 5'-deoxyadenosine + L-methionine + A + H2O + H(+). With respect to regulation, IRAK1 and TRAF6 synergistically activate RSAD2 increasing its activity with CTP as substrate about 10-fold. In terms of biological role, interferon-inducible antiviral protein which plays a major role in the cell antiviral state induced by type I and type II interferon. Catalyzes the conversion of cytidine triphosphate (CTP) to 3'-deoxy-3',4'-didehydro-CTP (ddhCTP) via a SAM-dependent radical mechanism. In turn, ddhCTP acts as a chain terminator for the RNA-dependent RNA polymerases from multiple viruses and directly inhibits viral replication. Therefore, inhibits a wide range of DNA and RNA viruses. Also promotes TLR7 and TLR9-dependent production of IFN-beta production in plasmacytoid dendritic cells (pDCs) by facilitating 'Lys-63'-linked ubiquitination of IRAK1 by TRAF6. Plays a role in CD4+ T-cells activation and differentiation. Facilitates T-cell receptor (TCR)-mediated GATA3 activation and optimal T-helper 2 (Th2) cytokine production by modulating NFKB1 and JUNB activities. Can inhibit secretion of soluble proteins. This chain is S-adenosylmethionine-dependent nucleotide dehydratase RSAD2, found in Rattus norvegicus (Rat).